The sequence spans 210 residues: MTQQAVLALLLTLAGILPGPLDAQDVHQSPRLTIASEGDSVNITCSTRGHLEGILMKKIWPQAYNVIYFEDRQEPTVDRTFSGRINFSGSQKNLTITISSLQLADTGDYTCEAVRKVSARGLFTTVVVKEKSSQEAYRSQEPLQTSFSFPAAIAVGFFFTGLLLGVVCSMLRKIQIKKLCASGIKESPCVVYEDMSYSNRKTPCIPNQYQ.

Positions 1–23 are cleaved as a signal peptide; that stretch reads MTQQAVLALLLTLAGILPGPLDA. One can recognise an Ig-like domain in the interval 24-129; that stretch reads QDVHQSPRLT…RGLFTTVVVK (106 aa). Residues 24–150 are Extracellular-facing; sequence QDVHQSPRLT…EPLQTSFSFP (127 aa). Residues Asn-42, Asn-86, and Asn-93 are each glycosylated (N-linked (GlcNAc...) asparagine). Cys-45 and Cys-111 form a disulfide bridge. Residues 151-171 traverse the membrane as a helical segment; sequence AAIAVGFFFTGLLLGVVCSML. Cys-168 carries S-palmitoyl cysteine lipidation. Residues 172-210 are Cytoplasmic-facing; it reads RKIQIKKLCASGIKESPCVVYEDMSYSNRKTPCIPNQYQ.

In terms of assembly, interacts with SECTM1.

It localises to the membrane. Transmembrane glycoprotein expressed by T-cells and natural killer (NK) cells and their precursors. Plays a costimulatory role in T-cell activation upon binding to its ligand K12/SECTM1. In turn, mediates the production of cytokines such as IL-2. On resting NK-cells, CD7 activation results in a significant induction of gamma-interferon levels. The chain is T-cell antigen CD7 (Cd7) from Mus musculus (Mouse).